We begin with the raw amino-acid sequence, 397 residues long: Lysophospholipid transporter LplT (397 aa).

Transmembrane regions (helical) follow at residues 16 to 36 (MMAV…LLFA), 53 to 73 (VLQM…GQVA), 91 to 111 (LGAV…LVGV), 139 to 159 (LMES…GMLA), 164 to 184 (GAAL…NLLI), 229 to 249 (WGAG…ALGI), 257 to 277 (YLNA…AKLV), 282 to 302 (VSRC…FSLQ), 304 to 324 (AALP…FFVV), 344 to 364 (IAVQ…LYSL), and 372 to 392 (VVGI…GLWL).

This sequence belongs to the major facilitator superfamily. LplT (TC 2.A.1.42) family.

The protein localises to the cell inner membrane. Catalyzes the facilitated diffusion of 2-acyl-glycero-3-phosphoethanolamine (2-acyl-GPE) into the cell. The chain is Lysophospholipid transporter LplT from Cronobacter sakazakii (strain ATCC BAA-894) (Enterobacter sakazakii).